The primary structure comprises 527 residues: ATP synthase subunit alpha (527 aa).

177–184 (GDRQTGKT) contributes to the ATP binding site.

Belongs to the ATPase alpha/beta chains family. As to quaternary structure, F-type ATPases have 2 components, CF(1) - the catalytic core - and CF(0) - the membrane proton channel. CF(1) has five subunits: alpha(3), beta(3), gamma(1), delta(1), epsilon(1). CF(0) has four main subunits: a(1), b(1), b'(1) and c(9-12).

Its subcellular location is the cell membrane. It catalyses the reaction ATP + H2O + 4 H(+)(in) = ADP + phosphate + 5 H(+)(out). Its function is as follows. Produces ATP from ADP in the presence of a proton gradient across the membrane. The alpha chain is a regulatory subunit. The polypeptide is ATP synthase subunit alpha (Roseiflexus sp. (strain RS-1)).